The chain runs to 400 residues: Aspartate/prephenate aminotransferase (400 aa).

Glycine 39, tryptophan 125, and asparagine 175 together coordinate L-aspartate. Lysine 239 bears the N6-(pyridoxal phosphate)lysine mark. Arginine 375 contributes to the L-aspartate binding site.

The protein belongs to the class-I pyridoxal-phosphate-dependent aminotransferase family. As to quaternary structure, homodimer. Requires pyridoxal 5'-phosphate as cofactor.

Its subcellular location is the cytoplasm. It carries out the reaction L-aspartate + 2-oxoglutarate = oxaloacetate + L-glutamate. The catalysed reaction is L-arogenate + 2-oxoglutarate = prephenate + L-glutamate. Functionally, catalyzes the reversible conversion of aspartate and 2-oxoglutarate to glutamate and oxaloacetate. Can also transaminate prephenate in the presence of glutamate. This Cereibacter sphaeroides (strain ATCC 17029 / ATH 2.4.9) (Rhodobacter sphaeroides) protein is Aspartate/prephenate aminotransferase.